An 826-amino-acid polypeptide reads, in one-letter code: DNA mismatch repair protein MutS (826 aa).

Glycine 622–serine 629 contributes to the ATP binding site.

This sequence belongs to the DNA mismatch repair MutS family.

In terms of biological role, this protein is involved in the repair of mismatches in DNA. It is possible that it carries out the mismatch recognition step. This protein has a weak ATPase activity. The chain is DNA mismatch repair protein MutS from Chlamydia abortus (strain DSM 27085 / S26/3) (Chlamydophila abortus).